Reading from the N-terminus, the 278-residue chain is Phosphatidylglycerol--prolipoprotein diacylglyceryl transferase (278 aa).

The next 3 helical transmembrane spans lie at 13–33, 50–70, and 89–109; these read LFGI…ALAV, VFDF…LYYV, and NGGL…FFFT. Arg-135 provides a ligand contact to a 1,2-diacyl-sn-glycero-3-phospho-(1'-sn-glycerol). The next 3 helical transmembrane spans lie at 175-195, 205-225, and 236-256; these read QPTF…LVLL, GEVF…IEGL, and IRVS…IVIV.

This sequence belongs to the Lgt family.

It is found in the cell membrane. It catalyses the reaction L-cysteinyl-[prolipoprotein] + a 1,2-diacyl-sn-glycero-3-phospho-(1'-sn-glycerol) = an S-1,2-diacyl-sn-glyceryl-L-cysteinyl-[prolipoprotein] + sn-glycerol 1-phosphate + H(+). The protein operates within protein modification; lipoprotein biosynthesis (diacylglyceryl transfer). Catalyzes the transfer of the diacylglyceryl group from phosphatidylglycerol to the sulfhydryl group of the N-terminal cysteine of a prolipoprotein, the first step in the formation of mature lipoproteins. The chain is Phosphatidylglycerol--prolipoprotein diacylglyceryl transferase from Enterococcus faecalis (strain ATCC 700802 / V583).